Here is a 275-residue protein sequence, read N- to C-terminus: uncharacterized protein (275 aa).

Belongs to the SMP-30/CGR1 family.

This is an uncharacterized protein from Sulfolobus acidocaldarius (strain ATCC 33909 / DSM 639 / JCM 8929 / NBRC 15157 / NCIMB 11770).